A 215-amino-acid polypeptide reads, in one-letter code: Cytochrome b6 (215 aa).

A helical transmembrane segment spans residues 32 to 52; sequence IFYCLGGITLTCFLVQVATGF. Cys35 contributes to the heme c binding site. Residues His86 and His100 each coordinate heme b. 3 consecutive transmembrane segments (helical) span residues 90–110, 116–136, and 186–206; these read ASMM…TGGF, LTWV…VTGY, and LHTF…FLMI. Residues His187 and His202 each contribute to the heme b site.

Belongs to the cytochrome b family. PetB subfamily. The 4 large subunits of the cytochrome b6-f complex are cytochrome b6, subunit IV (17 kDa polypeptide, PetD), cytochrome f and the Rieske protein, while the 4 small subunits are PetG, PetL, PetM and PetN. The complex functions as a dimer. Requires heme b as cofactor. Heme c is required as a cofactor.

Its subcellular location is the plastid. It localises to the chloroplast thylakoid membrane. Functionally, component of the cytochrome b6-f complex, which mediates electron transfer between photosystem II (PSII) and photosystem I (PSI), cyclic electron flow around PSI, and state transitions. This Pinus thunbergii (Japanese black pine) protein is Cytochrome b6.